A 561-amino-acid polypeptide reads, in one-letter code: Terpene synthase 3 (561 aa).

Residues Asp315, Asp319, Asp458, and Glu466 each coordinate Mg(2+). The short motif at 315–319 (DDVYD) is the DDXXD motif element.

The protein belongs to the terpene synthase family. Tpsa subfamily. Mg(2+) serves as cofactor. Mn(2+) is required as a cofactor. Mostly expressed in stems amd leaves, and, to a lower extent, in roots and fruits.

The enzyme catalyses (2E,6E)-farnesyl diphosphate = germacrene D + diphosphate. It catalyses the reaction (2E,6E)-farnesyl diphosphate = alpha-copaene + diphosphate. It participates in secondary metabolite biosynthesis; terpenoid biosynthesis. Its function is as follows. Sesquiterpene synthase involved in the biosynthesis of volatile compounds that contribute to the characteristic flavors of black pepper. Mediates the conversion of (2E,6E)-farnesyl diphosphate (FPP) into alpha-copaene and germacrene D. The protein is Terpene synthase 3 of Piper nigrum (Black pepper).